A 374-amino-acid chain; its full sequence is Putative 2,3-diketo-5-methylthiopentyl-1-phosphate enolase (374 aa).

Substrate contacts are provided by residues K138, 164-167 (QDDE), H255, G327, and 349-350 (GG). D166 is a Mg(2+) binding site.

It belongs to the RuBisCO large chain family. Type IV subfamily. As to quaternary structure, homodimer. Mg(2+) is required as a cofactor.

The catalysed reaction is 5-methylsulfanyl-2,3-dioxopentyl phosphate = 2-hydroxy-5-methylsulfanyl-3-oxopent-1-enyl phosphate. It functions in the pathway amino-acid biosynthesis; L-methionine biosynthesis via salvage pathway; L-methionine from S-methyl-5-thio-alpha-D-ribose 1-phosphate: step 3/6. Its function is as follows. Catalyzes the enolization of 2,3-diketo-5-methylthiopentyl-1-phosphate (DK-MTP-1-P) into 2-hydroxy-3-keto-5-methylthiopentenyl-1-phosphate (HK-MTPenyl-1-P). This Shouchella clausii (strain KSM-K16) (Alkalihalobacillus clausii) protein is Putative 2,3-diketo-5-methylthiopentyl-1-phosphate enolase (mtnW).